The sequence spans 120 residues: MFLLYEYDIFWAFLIISSLIPILAFLISGILAPISKGPEKLSSYESGIEPIGDAWLQFRIRYYMFALIFVVFDVETVFLYPWAMSFDVLGVSVFLEAFLFVLILIVGSVYAWRKGALEWS.

3 helical membrane-spanning segments follow: residues 9-29 (IFWA…LISG), 64-84 (MFAL…PWAM), and 88-108 (VLGV…IVGS).

Belongs to the complex I subunit 3 family. NDH is composed of at least 16 different subunits, 5 of which are encoded in the nucleus.

The protein resides in the plastid. It is found in the chloroplast thylakoid membrane. It catalyses the reaction a plastoquinone + NADH + (n+1) H(+)(in) = a plastoquinol + NAD(+) + n H(+)(out). It carries out the reaction a plastoquinone + NADPH + (n+1) H(+)(in) = a plastoquinol + NADP(+) + n H(+)(out). NDH shuttles electrons from NAD(P)H:plastoquinone, via FMN and iron-sulfur (Fe-S) centers, to quinones in the photosynthetic chain and possibly in a chloroplast respiratory chain. The immediate electron acceptor for the enzyme in this species is believed to be plastoquinone. Couples the redox reaction to proton translocation, and thus conserves the redox energy in a proton gradient. This chain is NAD(P)H-quinone oxidoreductase subunit 3, chloroplastic, found in Phaseolus vulgaris (Kidney bean).